The primary structure comprises 375 residues: Stimulator of interferon genes protein 2 (375 aa).

4 consecutive transmembrane segments (helical) span residues 30–50 (TATV…LLAV), 60–80 (IHFL…GELV), 114–134 (AGSI…VLYE), and 144–164 (YPIL…LVGL). 2',3'-cGAMP contacts are provided by Tyr-195, Arg-256, and Arg-262.

The protein belongs to the STING family.

Its subcellular location is the membrane. Functionally, facilitator of innate immune signaling that acts as a sensor of second messenger signals produced by cyclic GMP-AMP synthase-like receptors (cGLRs) and promotes the production of type I interferon. Innate immune response is triggered in response to nucleotides from viruses and bacteria delivered to the cytoplasm. Acts by binding cyclic dinucleotides: recognizes and binds 2'-3' linked cGAMP (2'-3'-cGAMP), a second messengers produced by cGLRs in response to nucleotides in the cytosol, such as double-stranded RNA (dsRNA). Upon binding to 2'-3'-cGAMP, oligomerizes and promotes the recruitment and subsequent activation of the transcription factor IRF3 to induce expression of type I interferon. This chain is Stimulator of interferon genes protein 2, found in Stylophora pistillata (Smooth cauliflower coral).